Here is a 250-residue protein sequence, read N- to C-terminus: Vitamin B12 import ATP-binding protein BtuD (250 aa).

The ABC transporter domain maps to 3–233 (LRQASVLPRL…EVLSPVFGVA (231 aa)). 29-36 (GPNGAGKS) serves as a coordination point for ATP.

The protein belongs to the ABC transporter superfamily. Vitamin B12 importer (TC 3.A.1.13.1) family. The complex is composed of two ATP-binding proteins (BtuD), two transmembrane proteins (BtuC) and a solute-binding protein (BtuF).

It is found in the cell inner membrane. The catalysed reaction is an R-cob(III)alamin(out) + ATP + H2O = an R-cob(III)alamin(in) + ADP + phosphate + H(+). Part of the ABC transporter complex BtuCDF involved in vitamin B12 import. Responsible for energy coupling to the transport system. This is Vitamin B12 import ATP-binding protein BtuD from Pectobacterium atrosepticum (strain SCRI 1043 / ATCC BAA-672) (Erwinia carotovora subsp. atroseptica).